The following is a 602-amino-acid chain: MPSDRQKKIRNFSIIAHIDHGKSTLADRLIEYTGLISQREMQSQMLDNMDLERERGITIKLQTIRLVYKAKDGEEYYLNLIDTPGHVDFTYEVSRSLAACEGAVLIVDAAQGIEAQTLANVYLALEQDLEIIPVINKIDLPSARPDEIKTEIEDIIGLDASEAPLISAKEGLNIEDVLESIVKNVPSPKGDINAPLKALIFDSYYDSYKGVIAYMRVMEGQVKKGMKVKMMATNKEFEVVEVGAFSPGAIPLDSLSAGDVGYLAASIKDVRHCRVGDTITDALNPTESPLPGYRKVNPMVYCGIYPAEGEKYEDIRDALEKLQVNDAALVFEPESSAALGFGFRCGFLGLLHMEIIQERLEREFDLDLITTAPSVIYKITKTNGEELMIQNPANMPTPQEIRIMEEPIVKTTIMVPNTYVGAVMELCQDRRGEMKDMQYIDDTRVNLYYEMPLNEVIYDFFDALKSKTKGYGSLDYELLGYRASDLVKLDILINGEQIDALSFIVHESKAYSRGKGMCEKLKDEIPRHQFPIPLQAAVGNKVISRETIKALRKDVLAKCYGGDISRKKKLLEKQKEGKKRMRQVGNVEVPQKAFMSVLKLDN.

Residues 7–189 enclose the tr-type G domain; that stretch reads KKIRNFSIIA…SIVKNVPSPK (183 aa). GTP-binding positions include 19–24 and 136–139; these read DHGKST and NKID.

Belongs to the TRAFAC class translation factor GTPase superfamily. Classic translation factor GTPase family. LepA subfamily.

The protein resides in the cell membrane. It carries out the reaction GTP + H2O = GDP + phosphate + H(+). Its function is as follows. Required for accurate and efficient protein synthesis under certain stress conditions. May act as a fidelity factor of the translation reaction, by catalyzing a one-codon backward translocation of tRNAs on improperly translocated ribosomes. Back-translocation proceeds from a post-translocation (POST) complex to a pre-translocation (PRE) complex, thus giving elongation factor G a second chance to translocate the tRNAs correctly. Binds to ribosomes in a GTP-dependent manner. The protein is Elongation factor 4 of Alkaliphilus oremlandii (strain OhILAs) (Clostridium oremlandii (strain OhILAs)).